A 604-amino-acid chain; its full sequence is Elongation factor 4 (604 aa).

The region spanning 7–189 (SRLRNFCIIA…AVVDRIPPPA (183 aa)) is the tr-type G domain. GTP contacts are provided by residues 19–24 (DHGKST) and 136–139 (NKID).

Belongs to the TRAFAC class translation factor GTPase superfamily. Classic translation factor GTPase family. LepA subfamily.

Its subcellular location is the cell inner membrane. It catalyses the reaction GTP + H2O = GDP + phosphate + H(+). Functionally, required for accurate and efficient protein synthesis under certain stress conditions. May act as a fidelity factor of the translation reaction, by catalyzing a one-codon backward translocation of tRNAs on improperly translocated ribosomes. Back-translocation proceeds from a post-translocation (POST) complex to a pre-translocation (PRE) complex, thus giving elongation factor G a second chance to translocate the tRNAs correctly. Binds to ribosomes in a GTP-dependent manner. The chain is Elongation factor 4 from Prochlorococcus marinus (strain MIT 9303).